Reading from the N-terminus, the 206-residue chain is MHERNYAVFRLLPLASLLLAACSVHTPSGPAKSQTSPEWRAHQQSLSALGRYQTRGAFAYLSSQQKVYALFNWQQTSADRYRLILTNPLGSTEMDLNVQPGVAQLVNNQGKRYVSDDPEVMIQKLAGMSIPLNDLRQWMLGLPGDATDFTLDSRGYLHTLNYSHNGQLWTVTYQGYHDDTVPALPSNLKLRQGDNRIKLKMDSWSL.

An N-terminal signal peptide occupies residues 1–21 (MHERNYAVFRLLPLASLLLAA). C22 carries N-palmitoyl cysteine lipidation. The S-diacylglycerol cysteine moiety is linked to residue C22.

This sequence belongs to the LolB family. Monomer.

The protein resides in the cell outer membrane. Functionally, plays a critical role in the incorporation of lipoproteins in the outer membrane after they are released by the LolA protein. This is Outer-membrane lipoprotein LolB from Sodalis glossinidius (strain morsitans).